A 344-amino-acid polypeptide reads, in one-letter code: Glyceraldehyde-3-phosphate dehydrogenase (344 aa).

NAD(+) is bound by residues 11-12 and Gly-110; that span reads TI. 139-141 is a D-glyceraldehyde 3-phosphate binding site; that stretch reads SCN. The active-site Nucleophile is Cys-140. Arg-169 contacts NAD(+). 195–196 provides a ligand contact to D-glyceraldehyde 3-phosphate; that stretch reads HG. Residue Gln-302 participates in NAD(+) binding.

Belongs to the glyceraldehyde-3-phosphate dehydrogenase family. In terms of assembly, homotetramer.

The protein localises to the cytoplasm. The catalysed reaction is D-glyceraldehyde 3-phosphate + phosphate + NADP(+) = (2R)-3-phospho-glyceroyl phosphate + NADPH + H(+). The enzyme catalyses D-glyceraldehyde 3-phosphate + phosphate + NAD(+) = (2R)-3-phospho-glyceroyl phosphate + NADH + H(+). It participates in carbohydrate degradation; glycolysis; pyruvate from D-glyceraldehyde 3-phosphate: step 1/5. This Pyrobaculum arsenaticum (strain DSM 13514 / JCM 11321 / PZ6) protein is Glyceraldehyde-3-phosphate dehydrogenase.